A 472-amino-acid chain; its full sequence is Alanine--anticapsin ligase (472 aa).

Residue Glu109 coordinates Mg(2+). ATP contacts are provided by Lys138 and Lys178. The ATP-grasp domain maps to 142–355 (RAAFNRAGVK…MAQLLLDVLC (214 aa)). Leu182 is a Mg(2+) binding site. ATP contacts are provided by residues 184 to 185 (SS), 226 to 229 (EEFL), and Gln268. Residues Glu273 and 309-311 (HTE) contribute to the substrate site. Glu311 and Glu324 together coordinate Mg(2+). Residue 328–331 (RFAG) participates in substrate binding.

Monomer or homodimer. The cofactor is Mg(2+).

It catalyses the reaction L-anticapsin + L-alanine + ATP = bacilysin + ADP + phosphate + H(+). It participates in antibiotic biosynthesis; bacilysin biosynthesis. Its function is as follows. Part of the bacABCDEFG operon responsible for the biosynthesis of bacilysin, an irreversible inactivator of the glutaminase domain of glucosamine synthetase. Catalyzes the formation of alpha-dipeptides from various L-amino acids in the presence of ATP. In vivo catalyzes the ligation of L-alanine and L-anticapsin (epoxycyclohexanonyl-Ala) to produce the final bacilysin antibiotic (L-Ala-L-4S-cyclohexenonyl-Ala dipeptide). The sequence is that of Alanine--anticapsin ligase from Bacillus amyloliquefaciens (Bacillus velezensis).